Consider the following 623-residue polypeptide: Interferon-induced GTP-binding protein Mx3 (623 aa).

Positions 31-304 constitute a Dynamin-type G domain; the sequence is DLALPAIAVI…LVHHIEKSLP (274 aa). Residues 41–48 are G1 motif; it reads GDQSSGKS. 41-48 provides a ligand contact to GTP; the sequence is GDQSSGKS. Residues 66 to 68 form a G2 motif region; it reads VTR. Positions 142–145 are G3 motif; it reads DLPG. GTP contacts are provided by residues 142-146 and 211-214; these read DLPGI and TKPD. The segment at 211–214 is G4 motif; that stretch reads TKPD. Residues 243-246 are G5 motif; it reads KCRG. The GED domain occupies 537–623; it reads LQEMMLHLKS…MKARSYLVEF (87 aa).

Belongs to the TRAFAC class dynamin-like GTPase superfamily. Dynamin/Fzo/YdjA family.

The protein localises to the cytoplasm. Does not inhibit strain RB-1 of the fish pathogen, infectious hematopoietic necrosis virus (IHNV). The protein is Interferon-induced GTP-binding protein Mx3 of Oncorhynchus mykiss (Rainbow trout).